The primary structure comprises 118 residues: Ribonuclease P protein component (118 aa).

It belongs to the RnpA family. In terms of assembly, consists of a catalytic RNA component (M1 or rnpB) and a protein subunit.

The enzyme catalyses Endonucleolytic cleavage of RNA, removing 5'-extranucleotides from tRNA precursor.. Functionally, RNaseP catalyzes the removal of the 5'-leader sequence from pre-tRNA to produce the mature 5'-terminus. It can also cleave other RNA substrates such as 4.5S RNA. The protein component plays an auxiliary but essential role in vivo by binding to the 5'-leader sequence and broadening the substrate specificity of the ribozyme. The sequence is that of Ribonuclease P protein component from Rickettsia conorii (strain ATCC VR-613 / Malish 7).